A 284-amino-acid polypeptide reads, in one-letter code: 2-dehydro-3-deoxyphosphooctonate aldolase (284 aa).

The protein belongs to the KdsA family.

It localises to the cytoplasm. The catalysed reaction is D-arabinose 5-phosphate + phosphoenolpyruvate + H2O = 3-deoxy-alpha-D-manno-2-octulosonate-8-phosphate + phosphate. It functions in the pathway carbohydrate biosynthesis; 3-deoxy-D-manno-octulosonate biosynthesis; 3-deoxy-D-manno-octulosonate from D-ribulose 5-phosphate: step 2/3. It participates in bacterial outer membrane biogenesis; lipopolysaccharide biosynthesis. The chain is 2-dehydro-3-deoxyphosphooctonate aldolase from Pseudoalteromonas translucida (strain TAC 125).